A 233-amino-acid chain; its full sequence is C-type lectin domain-containing protein 87 (233 aa).

The N-terminal stretch at 1–20 is a signal peptide; that stretch reads MRFFRFLVFPVIAGLSSVLA. The N-linked (GlcNAc...) asparagine glycan is linked to asparagine 26. Serine 32 is a glycosylation site (O-linked (Xyl...) (chondroitin sulfate) serine). Asparagine 81 carries an N-linked (GlcNAc...) asparagine glycan. The 131-residue stretch at 93-223 folds into the C-type lectin domain; that stretch reads FADSCYWIET…CTYLLYSICE (131 aa). Disulfide bonds link cysteine 114/cysteine 222 and cysteine 193/cysteine 214. Residue asparagine 225 is glycosylated (N-linked (GlcNAc...) asparagine).

The sequence is that of C-type lectin domain-containing protein 87 from Caenorhabditis briggsae.